The sequence spans 486 residues: Dipeptide and tripeptide permease B (486 aa).

Residues 1 to 27 (MNKPVSIGLLQQPKPFFMIFFVELWER) lie on the Cytoplasmic side of the membrane. The chain crosses the membrane as a helical span at residues 28 to 48 (FGYYGVQGVLTVYFVQKLGFS). Residues 49–52 (QEQA) lie on the Periplasmic side of the membrane. The chain crosses the membrane as a helical span at residues 53–73 (FITFGAFAALVFGLISIGGYV). Residues 74–82 (GDHLLGTKR) are Cytoplasmic-facing. The chain crosses the membrane as a helical span at residues 83 to 103 (TIVLGAIVLAIGYFMTGLSIL). At 104-106 (HPN) the chain is on the periplasmic side. A helical transmembrane segment spans residues 107–127 (LIFYALGTIAVGNGLFKANPA). The Cytoplasmic segment spans residues 128 to 146 (SLLSKCYPPKDPRLDGAFT). A helical transmembrane segment spans residues 147–167 (LFYMSINLGSLFSLALAPVIA). Residues 168–172 (EKFSY) lie on the Periplasmic side of the membrane. The helical transmembrane segment at 173-193 (AVTYNICGIGLIIALLVYIFC) threads the bilayer. The Cytoplasmic segment spans residues 194-211 (RNTVRNIGSEPDHQRINY). A helical membrane pass occupies residues 212 to 232 (TNLFLVVAGSVVMVYVCAWLM). Position 233 (His-233) is a topological domain, periplasmic. The helical transmembrane segment at 234-254 (NVKIANIMLITLSVIVVFIFF) threads the bilayer. Residues 255–267 (REALKQDKIGRNK) are Cytoplasmic-facing. The helical transmembrane segment at 268–288 (MFVAFILMLQAIVFFILYAQM) threads the bilayer. At 289-311 (PTSLNFFAIHNVHHQLLGFNINP) the chain is on the periplasmic side. The chain crosses the membrane as a helical span at residues 312–332 (VSFQALNPFWIVVASPILAVL). Topologically, residues 333–348 (YTHWGAKGKDLTMPAK) are cytoplasmic. Residues 349 to 369 (FAVGMFLCSLGFLTAAAAGLW) form a helical membrane-spanning segment. The Periplasmic portion of the chain corresponds to 370-375 (FADEQG). Residues 376-396 (LTSAWFIVLVYLFQGVGELMI) form a helical membrane-spanning segment. Topologically, residues 397-419 (SALGLAMIAALVPQYLMGFILGM) are cytoplasmic. A helical membrane pass occupies residues 420-440 (WYLTQATSSLLGGYVAALTAA). At 441 to 456 (PKGITDPLQTLPVYTS) the chain is on the periplasmic side. A helical membrane pass occupies residues 457–477 (VFGKIGIATFIVAIIMAATVP). Residues 478–486 (LLNRMMQEK) lie on the Cytoplasmic side of the membrane.

Belongs to the major facilitator superfamily. Proton-dependent oligopeptide transporter (POT/PTR) (TC 2.A.17) family. DtpB subfamily.

Its subcellular location is the cell inner membrane. Its function is as follows. Proton-dependent permease that transports di- and tripeptides. This is Dipeptide and tripeptide permease B from Photorhabdus luminescens (Xenorhabdus luminescens).